Consider the following 266-residue polypeptide: Thiazole synthase (266 aa).

Residue Lys110 is the Schiff-base intermediate with DXP of the active site. 1-deoxy-D-xylulose 5-phosphate is bound by residues Gly171, 197–198 (AG), and 219–220 (AT).

The protein belongs to the ThiG family. In terms of assembly, homotetramer. Forms heterodimers with either ThiH or ThiS.

The protein resides in the cytoplasm. The enzyme catalyses [ThiS sulfur-carrier protein]-C-terminal-Gly-aminoethanethioate + 2-iminoacetate + 1-deoxy-D-xylulose 5-phosphate = [ThiS sulfur-carrier protein]-C-terminal Gly-Gly + 2-[(2R,5Z)-2-carboxy-4-methylthiazol-5(2H)-ylidene]ethyl phosphate + 2 H2O + H(+). It functions in the pathway cofactor biosynthesis; thiamine diphosphate biosynthesis. Functionally, catalyzes the rearrangement of 1-deoxy-D-xylulose 5-phosphate (DXP) to produce the thiazole phosphate moiety of thiamine. Sulfur is provided by the thiocarboxylate moiety of the carrier protein ThiS. In vitro, sulfur can be provided by H(2)S. The polypeptide is Thiazole synthase (Thermobifida fusca (strain YX)).